An 89-amino-acid polypeptide reads, in one-letter code: Small ribosomal subunit protein bS20 (89 aa).

The segment at 1 to 25 (MANTPQSKKRARQLERRTAVNKARR) is disordered.

The protein belongs to the bacterial ribosomal protein bS20 family.

In terms of biological role, binds directly to 16S ribosomal RNA. This Paracoccus denitrificans (strain Pd 1222) protein is Small ribosomal subunit protein bS20.